A 209-amino-acid chain; its full sequence is MSYLYDSYFQYIHYNVSMIPTVVKQTSRGDRAYDIFSLLLKERIIFVIGKIENFMANLIVAQIMFLESEDPVKDIHLYINSPGGEVTAGMSIYDIMQFVKPNISTYCIGQAASMGAFLLAAGTTGKRFCLPNSRVMIHQPLGSLHGQATDIAIHATEILKVKENINKLMAKHTGKSIDVIRQDMERDCFLSADESVKYGLVDSVLSKRI.

Residue Ser-113 is the Nucleophile of the active site. The active site involves His-138.

Belongs to the peptidase S14 family. In terms of assembly, fourteen ClpP subunits assemble into 2 heptameric rings which stack back to back to give a disk-like structure with a central cavity, resembling the structure of eukaryotic proteasomes.

The protein localises to the cytoplasm. The catalysed reaction is Hydrolysis of proteins to small peptides in the presence of ATP and magnesium. alpha-casein is the usual test substrate. In the absence of ATP, only oligopeptides shorter than five residues are hydrolyzed (such as succinyl-Leu-Tyr-|-NHMec, and Leu-Tyr-Leu-|-Tyr-Trp, in which cleavage of the -Tyr-|-Leu- and -Tyr-|-Trp bonds also occurs).. Functionally, cleaves peptides in various proteins in a process that requires ATP hydrolysis. Has a chymotrypsin-like activity. Plays a major role in the degradation of misfolded proteins. The chain is ATP-dependent Clp protease proteolytic subunit from Blochmanniella floridana.